Here is a 1158-residue protein sequence, read N- to C-terminus: Putative HERC2-like protein 3 (1158 aa).

Residues 281 to 302 are disordered; it reads PRKKRVPKKPESTDDEEKIGNE. A compositionally biased stretch (acidic residues) spans 293 to 302; the sequence is TDDEEKIGNE. The 74-residue stretch at 587-660 folds into the MIB/HERC2 domain; sequence SGPELAAMMK…NYDLKLAELP (74 aa). Positions 662-684 are disordered; sequence PAQPSAEDSDTEDDSEAEQTERN. Positions 668–679 are enriched in acidic residues; it reads EDSDTEDDSEAE.

This chain is Putative HERC2-like protein 3 (HERC2P3), found in Homo sapiens (Human).